The primary structure comprises 114 residues: UPF0102 protein HPSH_02690 (114 aa).

The protein belongs to the UPF0102 family.

This chain is UPF0102 protein HPSH_02690, found in Helicobacter pylori (strain Shi470).